The sequence spans 386 residues: Probable zinc transporter zrg17 (386 aa).

Transmembrane regions (helical) follow at residues 102-122 (ILFF…ILLT), 128-148 (IVEG…SFLV), 163-183 (MELL…MNLL), 208-228 (VHIH…FALL), 243-263 (FFHG…SLGY), and 268-288 (FLSH…GFSI).

Belongs to the cation diffusion facilitator (CDF) transporter (TC 2.A.4) family. SLC30A subfamily. As to quaternary structure, interacts with cis4.

It is found in the cytoplasm. Its subcellular location is the nucleus membrane. Probable transporter involved in the regulation of zinc homeostasis. The chain is Probable zinc transporter zrg17 (zrg17) from Schizosaccharomyces pombe (strain 972 / ATCC 24843) (Fission yeast).